The sequence spans 188 residues: Antitoxin SocA (188 aa).

As to quaternary structure, interacts with cognate toxin SocB and with ClpX.

In terms of biological role, antitoxin component of an atypical type II toxin-antitoxin (TA) system. Unlike most type II TA systems, neutralizes the toxic activity of cognate toxin SocB by acting as an adapter to promote its degradation by ClpXP; degradation is dependent on the N-terminus of ClpX. The polypeptide is Antitoxin SocA (Caulobacter vibrioides (strain NA1000 / CB15N) (Caulobacter crescentus)).